The following is a 229-amino-acid chain: ATP synthase subunit a (229 aa).

6 helical membrane-spanning segments follow: residues 25 to 45 (ADAI…SMLA), 82 to 102 (FFPL…IGLV), 104 to 124 (GFFP…IVFV), 142 to 162 (FLGP…IGHF), 181 to 201 (LVLM…MMLM), and 202 to 222 (GVLV…IYIQ).

The protein belongs to the ATPase A chain family. In terms of assembly, F-type ATPases have 2 components, CF(1) - the catalytic core - and CF(0) - the membrane proton channel. CF(1) has five subunits: alpha(3), beta(3), gamma(1), delta(1), epsilon(1). CF(0) has three main subunits: a(1), b(2) and c(9-12). The alpha and beta chains form an alternating ring which encloses part of the gamma chain. CF(1) is attached to CF(0) by a central stalk formed by the gamma and epsilon chains, while a peripheral stalk is formed by the delta and b chains.

The protein resides in the cell inner membrane. Its function is as follows. Key component of the proton channel; it plays a direct role in the translocation of protons across the membrane. This chain is ATP synthase subunit a, found in Geotalea uraniireducens (strain Rf4) (Geobacter uraniireducens).